A 203-amino-acid polypeptide reads, in one-letter code: V-type ATP synthase subunit D (203 aa).

The protein belongs to the V-ATPase D subunit family.

In terms of biological role, produces ATP from ADP in the presence of a proton gradient across the membrane. In Streptococcus pneumoniae (strain Hungary19A-6), this protein is V-type ATP synthase subunit D.